Here is a 354-residue protein sequence, read N- to C-terminus: Uroporphyrinogen decarboxylase (354 aa).

Substrate contacts are provided by residues 27–31, Asp-77, Tyr-154, Thr-209, and His-327; that span reads RQAGR.

Belongs to the uroporphyrinogen decarboxylase family. In terms of assembly, homodimer.

The protein localises to the cytoplasm. The catalysed reaction is uroporphyrinogen III + 4 H(+) = coproporphyrinogen III + 4 CO2. Its pathway is porphyrin-containing compound metabolism; protoporphyrin-IX biosynthesis; coproporphyrinogen-III from 5-aminolevulinate: step 4/4. Functionally, catalyzes the decarboxylation of four acetate groups of uroporphyrinogen-III to yield coproporphyrinogen-III. In Psychromonas ingrahamii (strain DSM 17664 / CCUG 51855 / 37), this protein is Uroporphyrinogen decarboxylase.